A 376-amino-acid polypeptide reads, in one-letter code: TraB domain-containing protein (376 aa).

M1 bears the N-acetylmethionine mark. Positions 1 to 34 (MDGEEQQPPHEANVEPVVPSEASEPVPRVLSGDP) are disordered. Residues 14 to 27 (VEPVVPSEASEPVP) are compositionally biased toward low complexity. Residue T65 is modified to Phosphothreonine.

In Homo sapiens (Human), this protein is TraB domain-containing protein (TRABD).